The chain runs to 134 residues: Seminal plasma protein PDC-109 (134 aa).

The signal sequence occupies residues Met1–Gly25. The O-linked (GalNAc...) threonine glycan is linked to Thr36. Fibronectin type-II domains lie at Pro44–Gln88 and Arg89–Cys134. Cystine bridges form between Cys49-Cys73, Cys63-Cys86, Cys94-Cys119, and Cys108-Cys134.

The protein belongs to the seminal plasma protein family. Homodimer. In terms of processing, O-linked glycan consists of Gal-GalNAc disaccharide which is modified with a sialic acid residue (macro- and/or microheterogeneity account for differences between BSP-A1 and BSP-A2). In terms of tissue distribution, major component of seminal plasma.

The protein localises to the secreted. In terms of biological role, could enhance the fertilizing capacity of bull spermatozoa upon interaction with heparin-like glycosaminoglycans present in the female genital tract. Exhibits both simulatory and inhibitory actions on the release of pituitary gonadotropins. The polypeptide is Seminal plasma protein PDC-109 (Bos taurus (Bovine)).